Reading from the N-terminus, the 429-residue chain is MFKRIALVCALFSGVCFAEGKQLLDKVVAIVNDNVITSSELNAQVELSKKQIIAQNMQMPDESVLRKQVLQHLIDVDLEMQMAKQNGITIENAEIDEAIEKIAASNHLNLSQMRDEITKQGISWQEYRQNIRKEMLISRVQQKAVGKDIIVTNEQVEQYLKTSGRIENSNLTYHLKNIVIPLSEEPTTKQLQRAKIEAENLLNKIKKGEDFSRLAIEESSGEFALEGGDLGERHLAELPEVFAKEVVHMKVGQVAGPIRAGNGFHLIKLVAVGGENQRHVITQTHVRHILLKPDASMVPSEAIKQVNNIYRQIQSGKDFALMAKQYSLDAASAVKGGDLGWVNPGELVPEFEKTMNSLPLHKVSKPVKTQYGWHLIEVIARRQKDDSEAFKKQQVRQFLQQRKFVEAVQNWQQHLRSQAYINIVDKDLA.

Positions 1–18 (MFKRIALVCALFSGVCFA) are cleaved as a signal peptide. 2 consecutive PpiC domains span residues 170–271 (NLTY…KLVA) and 281–380 (ITQT…EVIA).

Its subcellular location is the periplasm. It catalyses the reaction [protein]-peptidylproline (omega=180) = [protein]-peptidylproline (omega=0). In terms of biological role, chaperone involved in the correct folding and assembly of outer membrane proteins. Recognizes specific patterns of aromatic residues and the orientation of their side chains, which are found more frequently in integral outer membrane proteins. May act in both early periplasmic and late outer membrane-associated steps of protein maturation. The sequence is that of Chaperone SurA from Legionella pneumophila subsp. pneumophila (strain Philadelphia 1 / ATCC 33152 / DSM 7513).